The chain runs to 357 residues: Zinc finger protein 830 (357 aa).

A C2H2-type zinc finger spans residues 47–69; it reads CVVCNIQIKSELLWPAHILGKQH. 3 disordered regions span residues 98–126, 157–194, and 231–255; these read RKGS…TKLP, DDDE…ADRL, and ALPE…PKDQ. Over residues 99–115 the composition is skewed to basic and acidic residues; that stretch reads KGSEPENQESKRIKGTE. The segment covering 157–168 has biased composition (acidic residues); it reads DDDEVEGEEYEN. Positions 242-255 are enriched in basic and acidic residues; sequence ADAKVRKVDAPKDQ. Residues 279–325 adopt a coiled-coil conformation; it reads AEEDEEGRLDRQIDEIDEQIECYRRVEHLRDLKDTLQDAKMEVLKSK.

Its subcellular location is the nucleus. The protein resides in the chromosome. It localises to the nucleus speckle. Its function is as follows. May act as an important regulator of the cell cycle that participates in the maintenance of genome integrity. This chain is Zinc finger protein 830, found in Xenopus tropicalis (Western clawed frog).